The chain runs to 267 residues: Translation initiation factor 2 subunit alpha (267 aa).

Positions 12-83 (GEIVMATVER…KRKYANLSLR (72 aa)) constitute an S1 motif domain.

It belongs to the eIF-2-alpha family. As to quaternary structure, heterotrimer composed of an alpha, a beta and a gamma chain.

Its function is as follows. eIF-2 functions in the early steps of protein synthesis by forming a ternary complex with GTP and initiator tRNA. In Methanopyrus kandleri (strain AV19 / DSM 6324 / JCM 9639 / NBRC 100938), this protein is Translation initiation factor 2 subunit alpha.